An 85-amino-acid polypeptide reads, in one-letter code: Progonadoliberin-2 (85 aa).

Residues 1 to 23 (MCVSRLVLLFGLLLCVGAQLSNA) form the signal peptide. Glutamine 24 bears the Pyrrolidone carboxylic acid mark. Glycine 33 bears the Glycine amide mark.

This sequence belongs to the GnRH family.

It is found in the secreted. Stimulates the secretion of gonadotropins. This Dicentrarchus labrax (European seabass) protein is Progonadoliberin-2 (gnrh2).